Here is a 214-residue protein sequence, read N- to C-terminus: Stringent starvation protein A homolog (214 aa).

Residues 9-87 (SVMSLFSDKN…YLDERFPHPP (79 aa)) enclose the GST N-terminal domain. The GST C-terminal domain maps to 92 to 209 (YPVLRGKSRL…SIGGSAPKHL (118 aa)).

This sequence belongs to the GST superfamily. HSP26 family.

Its function is as follows. Forms an equimolar complex with the RNA polymerase holoenzyme (RNAP) but not with the core enzyme. The chain is Stringent starvation protein A homolog (sspA) from Haemophilus ducreyi (strain 35000HP / ATCC 700724).